The following is an 807-amino-acid chain: MFSAGAESLLHQAREIQDEELRRFCSRVTKLLQEAPGPATVDALQRLFLIVSATKYPRRLEKMCVDLLQTTLCLPASPEQLQVLCAAILREMSPFNDLALSCDHTPNTRQLSLVASVLLAQGDRKGEIRCVSQRIFKILENRQPEGPSVRPLLPILSKVIGLAPGILMEDQTNLLSKRLVDWLRYASIQQGLPYSGGFFSTPRTRQPGPITEVDGAVASDFFTVLSTGQHFTEDQWVNMQAFSMLRKWLLHSGPEDPCSPDADDKSELEGSTLSVLSAASTASRLLPPRERLREVAFEYCQRLLEQSNRRALRKGDSDLQKACLVEAVSVLDVLCRQDPSFLYRTLSCLKALHRRLGEDPGSERALVPLAQFFLNHGEAAAMDAEAVYGQLLRGLPSERFHSPTLAFEVIHFCTHNLALFDSHFLSLLRLSFPSLFKFLAWNSPPLTAEFVVLLPALVDAGTAVEMLHALLDLPCLTAALDLQLRSTQTPSERLLWDISLRVPSCLEAFQDPQFQGLFRHLLRTKASGSTERLTPLHQVLKPMASCARVTQCAEAVPVLLQAFFSAVTQTADGALINQLALLLLERSDSLYPVPQYEARVHGVLSSQLLVLCKLKPSLVVELSRELLEFVGSVSSIHSRASVFTCVVWAIGEYLSVTWDKRCTAEQINKFFEALEALLFEVTQSRPLADLPCCPPEVVTALMTTLTKLASRSQDLIPRVSLFLSKMRTLAQNPATSSVHSEEGAESIRTRASELLTLLKMPSVAQFVFTPPAGVCQPRYHRDTNVALPLALRTVSRLVEKEAGLLPG.

In terms of assembly, probably part of the adaptor protein complex 5 (AP-5) a tetramer composed of AP5B1, AP5M1, AP5S1 and AP5Z1. Interacts with ZFYVE26 and SPG11.

Its subcellular location is the cytoplasm. The protein resides in the nucleus. Functionally, as part of AP-5, a probable fifth adaptor protein complex it may be involved in endosomal transport. This chain is AP-5 complex subunit zeta-1 (Ap5z1), found in Mus musculus (Mouse).